We begin with the raw amino-acid sequence, 379 residues long: uncharacterized protein (379 aa).

This is an uncharacterized protein from Tortricidae (ClGV).